The following is a 520-amino-acid chain: ADP,ATP carrier protein 4 (520 aa).

Helical transmembrane passes span 43 to 63, 80 to 100, 111 to 131, 166 to 186, 201 to 221, 240 to 260, 305 to 325, 339 to 359, 370 to 390, 399 to 419, 462 to 482, and 485 to 505; these read LSKF…QNLI, ISFL…AIYV, IFYL…YVIF, FSLF…LLFW, FYPL…QFLE, FHTL…IVGI, LIAT…GPWK, AAFI…FVVL, FTAA…FFAV, LIVA…IGAI, LGKS…PSAS, and SISV…FWAV.

Belongs to the ADP/ATP translocase tlc family.

Its subcellular location is the cell membrane. Its function is as follows. Provides the rickettsial cell with host ATP in exchange for rickettsial ADP. This is an obligate exchange system. This energy acquiring activity is an important component of rickettsial parasitism. The sequence is that of ADP,ATP carrier protein 4 (tlcD) from Rickettsia bellii (strain RML369-C).